The primary structure comprises 308 residues: Olfactory receptor 4E2 (308 aa).

The Extracellular portion of the chain corresponds to 1 to 24 (MGALNQTRVTEFIFLGLTDNWVLE). N-linked (GlcNAc...) asparagine glycosylation occurs at asparagine 5. A helical membrane pass occupies residues 25 to 45 (ILFFVPFTVTYMLTLLGNFLI). At 46–57 (VVTIVFTPRLHN) the chain is on the cytoplasmic side. The chain crosses the membrane as a helical span at residues 58–78 (PMYFFLSNLSFIDICHSSVTV). The Extracellular segment spans residues 79–97 (PKMLEGLLLERKTISFDNC). Cysteine 97 and cysteine 179 form a disulfide bridge. Residues 98–118 (IAQLFFLHLFACSEIFLLTIM) form a helical membrane-spanning segment. Cu cation-binding residues include histidine 105 and cysteine 109. Residues 119–143 (AYDRYVAICIPLHYSNVMNMKVCVQ) are Cytoplasmic-facing. The chain crosses the membrane as a helical span at residues 144–164 (LVFALWLGGTIHSLVQTFLTI). The Extracellular portion of the chain corresponds to 165-204 (RLPYCGPNIIDSYFCDVPPVIKLACTDTYLTGILIVSNSG). A helical membrane pass occupies residues 205–225 (TISLVCFLALVTSYTVILFSL). Residues 226–236 (RKQSAEGRRKA) lie on the Cytoplasmic side of the membrane. The helical transmembrane segment at 237–257 (LSTCSAHFMVVALFFGPCIFL) threads the bilayer. The Extracellular segment spans residues 258–268 (YTRPDSSFSID). Cu cation is bound at residue arginine 260. A helical transmembrane segment spans residues 269–289 (KVVSVFYTVVTPLLNPLIYTL). The Cytoplasmic portion of the chain corresponds to 290 to 308 (RNEEVKTAMKHLRQRRICS).

This sequence belongs to the G-protein coupled receptor 1 family. Expressed in olfactory epithelium, specifically in the olfactory sensory neurons of the septal organ.

It localises to the cell membrane. Copper binding enhances receptor activity in response to odorant binding. Functionally, olfactory receptor that is activated by the binding of organosulfur odorants with thioether groups such as (methylthio)methanethiol (MTMT) and bis(methylthiomethyl) disulfide. Also binds odorants cis-cyclooctene and tert-butyl mercaptan. The activity of this receptor is mediated by G proteins which activate adenylyl cyclase (Potential). This chain is Olfactory receptor 4E2, found in Mus musculus (Mouse).